A 307-amino-acid polypeptide reads, in one-letter code: Pseudouridine-5'-phosphate glycosidase (307 aa).

Catalysis depends on E26, which acts as the Proton donor. Positions 88 and 108 each coordinate substrate. Position 140 (D140) interacts with Mn(2+). 142-144 provides a ligand contact to substrate; that stretch reads SAD. The active-site Nucleophile is K161.

Belongs to the pseudouridine-5'-phosphate glycosidase family. As to quaternary structure, homotrimer. The cofactor is Mn(2+).

The catalysed reaction is D-ribose 5-phosphate + uracil = psi-UMP + H2O. In terms of biological role, catalyzes the reversible cleavage of pseudouridine 5'-phosphate (PsiMP) to ribose 5-phosphate and uracil. Functions biologically in the cleavage direction, as part of a pseudouridine degradation pathway. The protein is Pseudouridine-5'-phosphate glycosidase of Clostridium botulinum (strain Langeland / NCTC 10281 / Type F).